The primary structure comprises 141 residues: MAVERTLSIIKPDAVAKNIIGEIYNRFEKAGLKIVAARMVHLSREQAEGFYAVHKERPFFNDLVGFMISGPVMVQVLEGENAIVKNREIMGATNPAEAAAGTLRHDYAETIDANAVHGSDAPETAKQEIEFFFKADELCSR.

Residues K11, F59, R87, T93, R104, and N114 each contribute to the ATP site. The Pros-phosphohistidine intermediate role is filled by H117.

Belongs to the NDK family. Homotetramer. Mg(2+) serves as cofactor.

It localises to the cytoplasm. The catalysed reaction is a 2'-deoxyribonucleoside 5'-diphosphate + ATP = a 2'-deoxyribonucleoside 5'-triphosphate + ADP. It carries out the reaction a ribonucleoside 5'-diphosphate + ATP = a ribonucleoside 5'-triphosphate + ADP. In terms of biological role, major role in the synthesis of nucleoside triphosphates other than ATP. The ATP gamma phosphate is transferred to the NDP beta phosphate via a ping-pong mechanism, using a phosphorylated active-site intermediate. This is Nucleoside diphosphate kinase from Alkalilimnicola ehrlichii (strain ATCC BAA-1101 / DSM 17681 / MLHE-1).